The following is a 571-amino-acid chain: Origin recognition complex subunit 5 (571 aa).

2 disordered regions span residues Asp90 to Asp142 and Gln404 to Leu430. Low complexity-rich tracts occupy residues Asn107–Asp133 and Pro407–Lys416. Residues Gln417–Arg428 are compositionally biased toward basic and acidic residues.

This sequence belongs to the ORC1 family. As to quaternary structure, ORC is composed of six subunits.

The protein resides in the nucleus. Its function is as follows. Component of the origin recognition complex (ORC) that binds origins of replication. DNA-binding is ATP-dependent, however specific DNA sequences that define origins of replication have not been identified so far. ORC is required to assemble the pre-replication complex necessary to initiate DNA replication. The chain is Origin recognition complex subunit 5 (orcE) from Dictyostelium discoideum (Social amoeba).